A 134-amino-acid polypeptide reads, in one-letter code: Ribosome-binding factor A (134 aa).

Belongs to the RbfA family. In terms of assembly, monomer. Binds 30S ribosomal subunits, but not 50S ribosomal subunits or 70S ribosomes.

It is found in the cytoplasm. In terms of biological role, one of several proteins that assist in the late maturation steps of the functional core of the 30S ribosomal subunit. Associates with free 30S ribosomal subunits (but not with 30S subunits that are part of 70S ribosomes or polysomes). Required for efficient processing of 16S rRNA. May interact with the 5'-terminal helix region of 16S rRNA. In Rhizobium etli (strain CIAT 652), this protein is Ribosome-binding factor A.